Reading from the N-terminus, the 466-residue chain is tRNA-2-methylthio-N(6)-dimethylallyladenosine synthase (466 aa).

An MTTase N-terminal domain is found at 21–137 (GSYWITTFGC…LEDLLNQVDN (117 aa)). Positions 30, 66, 100, 172, 176, and 179 each coordinate [4Fe-4S] cluster. Residues 158 to 395 (RDSNICAWVN…NLLVEQTAKD (238 aa)) form the Radical SAM core domain. Residues 398-466 (TRYHNQIVEV…AFSLTGSPIQ (69 aa)) enclose the TRAM domain.

It belongs to the methylthiotransferase family. MiaB subfamily. In terms of assembly, monomer. Requires [4Fe-4S] cluster as cofactor.

The protein localises to the cytoplasm. It catalyses the reaction N(6)-dimethylallyladenosine(37) in tRNA + (sulfur carrier)-SH + AH2 + 2 S-adenosyl-L-methionine = 2-methylsulfanyl-N(6)-dimethylallyladenosine(37) in tRNA + (sulfur carrier)-H + 5'-deoxyadenosine + L-methionine + A + S-adenosyl-L-homocysteine + 2 H(+). Its function is as follows. Catalyzes the methylthiolation of N6-(dimethylallyl)adenosine (i(6)A), leading to the formation of 2-methylthio-N6-(dimethylallyl)adenosine (ms(2)i(6)A) at position 37 in tRNAs that read codons beginning with uridine. The polypeptide is tRNA-2-methylthio-N(6)-dimethylallyladenosine synthase (Prochlorococcus marinus (strain SARG / CCMP1375 / SS120)).